We begin with the raw amino-acid sequence, 205 residues long: GTP cyclohydrolase-2 (205 aa).

49–53 (RLHSE) is a GTP binding site. Cys-54, Cys-65, and Cys-67 together coordinate Zn(2+). Residues Gln-70, 92–94 (EGR), and Thr-114 contribute to the GTP site. Catalysis depends on Asp-126, which acts as the Proton acceptor. Arg-128 acts as the Nucleophile in catalysis. GTP contacts are provided by Thr-149 and Lys-154.

The protein belongs to the GTP cyclohydrolase II family. Requires Zn(2+) as cofactor.

It carries out the reaction GTP + 4 H2O = 2,5-diamino-6-hydroxy-4-(5-phosphoribosylamino)-pyrimidine + formate + 2 phosphate + 3 H(+). It participates in cofactor biosynthesis; riboflavin biosynthesis; 5-amino-6-(D-ribitylamino)uracil from GTP: step 1/4. In terms of biological role, catalyzes the conversion of GTP to 2,5-diamino-6-ribosylamino-4(3H)-pyrimidinone 5'-phosphate (DARP), formate and pyrophosphate. The sequence is that of GTP cyclohydrolase-2 from Pseudomonas paraeruginosa (strain DSM 24068 / PA7) (Pseudomonas aeruginosa (strain PA7)).